Reading from the N-terminus, the 336-residue chain is Holliday junction branch migration complex subunit RuvB (336 aa).

Residues 1 to 180 (MRRTGIRLSW…FGIVEHLEYY (180 aa)) form a large ATPase domain (RuvB-L) region. ATP-binding positions include leucine 18, arginine 19, glycine 60, lysine 63, threonine 64, threonine 65, 127–129 (EDF), arginine 170, tyrosine 180, and arginine 217. Threonine 64 contributes to the Mg(2+) binding site. Residues 181–251 (TPEELAQGVM…RALEALAALG (71 aa)) are small ATPAse domain (RuvB-S). The interval 254–336 (ELGLEKRDRE…PPPVGPLLEP (83 aa)) is head domain (RuvB-H). DNA-binding residues include arginine 309 and arginine 314.

It belongs to the RuvB family. In terms of assembly, homohexamer. Forms an RuvA(8)-RuvB(12)-Holliday junction (HJ) complex. HJ DNA is sandwiched between 2 RuvA tetramers; dsDNA enters through RuvA and exits via RuvB. An RuvB hexamer assembles on each DNA strand where it exits the tetramer. Each RuvB hexamer is contacted by two RuvA subunits (via domain III) on 2 adjacent RuvB subunits; this complex drives branch migration. In the full resolvosome a probable DNA-RuvA(4)-RuvB(12)-RuvC(2) complex forms which resolves the HJ.

It localises to the cytoplasm. It carries out the reaction ATP + H2O = ADP + phosphate + H(+). In terms of biological role, the RuvA-RuvB-RuvC complex processes Holliday junction (HJ) DNA during genetic recombination and DNA repair, while the RuvA-RuvB complex plays an important role in the rescue of blocked DNA replication forks via replication fork reversal (RFR). RuvA specifically binds to HJ cruciform DNA, conferring on it an open structure. The RuvB hexamer acts as an ATP-dependent pump, pulling dsDNA into and through the RuvAB complex. RuvB forms 2 homohexamers on either side of HJ DNA bound by 1 or 2 RuvA tetramers; 4 subunits per hexamer contact DNA at a time. Coordinated motions by a converter formed by DNA-disengaged RuvB subunits stimulates ATP hydrolysis and nucleotide exchange. Immobilization of the converter enables RuvB to convert the ATP-contained energy into a lever motion, pulling 2 nucleotides of DNA out of the RuvA tetramer per ATP hydrolyzed, thus driving DNA branch migration. The RuvB motors rotate together with the DNA substrate, which together with the progressing nucleotide cycle form the mechanistic basis for DNA recombination by continuous HJ branch migration. Branch migration allows RuvC to scan DNA until it finds its consensus sequence, where it cleaves and resolves cruciform DNA. The sequence is that of Holliday junction branch migration complex subunit RuvB from Thermus thermophilus (strain ATCC BAA-163 / DSM 7039 / HB27).